The primary structure comprises 900 residues: Phosphoenolpyruvate carboxylase (900 aa).

Active-site residues include His140 and Lys568.

It belongs to the PEPCase type 1 family. Mg(2+) is required as a cofactor.

The catalysed reaction is oxaloacetate + phosphate = phosphoenolpyruvate + hydrogencarbonate. Its function is as follows. Forms oxaloacetate, a four-carbon dicarboxylic acid source for the tricarboxylic acid cycle. This Neisseria meningitidis serogroup C / serotype 2a (strain ATCC 700532 / DSM 15464 / FAM18) protein is Phosphoenolpyruvate carboxylase.